Reading from the N-terminus, the 424-residue chain is Serine/threonine-protein kinase H1 (424 aa).

Gly-2 carries the N-myristoyl glycine lipid modification. The S-palmitoyl cysteine moiety is linked to residue Cys-3. Residues 59-79 (APPCPGVPNTGHTAPPSEPPR) are disordered. A Protein kinase domain is found at 98–355 (YDIKALIGRG…ALQALRHPWV (258 aa)). Residues 104-112 (IGRGSFSRV) and Lys-127 contribute to the ATP site. Residue Asp-218 is the Proton acceptor of the active site. Residues 378 to 408 (RASSRCQSTKSSQSTRSSRSTRSNKSRRVRE) form a disordered region. Residues Ser-380 and Ser-381 each carry the phosphoserine; by autocatalysis modification. Positions 381–398 (SRCQSTKSSQSTRSSRST) are enriched in low complexity.

The protein belongs to the protein kinase superfamily. CAMK Ser/Thr protein kinase family. As to quaternary structure, homodimer. Post-translationally, autophosphorylated on serine residues. In terms of processing, myristoylated. Required for membrane association. Prerequisite for palmitoylation to occur. Palmitoylated.

It localises to the golgi apparatus. Its subcellular location is the cytoplasm. The protein localises to the cytoskeleton. It is found in the microtubule organizing center. The protein resides in the centrosome. It localises to the nucleus speckle. Its subcellular location is the endoplasmic reticulum membrane. The protein localises to the cell membrane. It catalyses the reaction L-seryl-[protein] + ATP = O-phospho-L-seryl-[protein] + ADP + H(+). It carries out the reaction L-threonyl-[protein] + ATP = O-phospho-L-threonyl-[protein] + ADP + H(+). With respect to regulation, activity depends on Ca(2+) concentration. In terms of biological role, serine/threonine protein kinase that may be involved in the regulation of pre-mRNA processing. It may phosphorylate components of nuclear splice factor compartments (SFC), such as non-snRNP splicing factors containing a serine/arginine-rich domain (SR proteins). Reversible phosphorylation of SR proteins may cause their release into the nucleoplasm and change their local concentration, thereby influencing alternative splicing. In Mus musculus (Mouse), this protein is Serine/threonine-protein kinase H1 (Pskh1).